The following is a 94-amino-acid chain: Small ribosomal subunit protein uS19c (94 aa).

It belongs to the universal ribosomal protein uS19 family.

Its subcellular location is the plastid. In terms of biological role, protein S19 forms a complex with S13 that binds strongly to the 16S ribosomal RNA. The chain is Small ribosomal subunit protein uS19c (rps19) from Epifagus virginiana (Beechdrops).